A 529-amino-acid polypeptide reads, in one-letter code: uncharacterized protein (529 aa).

2 ABC transporter domains span residues 6–257 and 287–526; these read LAIE…QKLL and IRKG…RQLL. ATP is bound by residues 42–49 and 319–326; these read GESGSGKS.

Belongs to the ABC transporter superfamily.

This is an uncharacterized protein from Escherichia coli (strain K12).